The following is a 288-amino-acid chain: Probable proteasome subunit alpha type-7 (288 aa).

An N-acetylthreonine modification is found at threonine 2. The segment at 247–288 (INGDDDEDEDDSDNVMSSDDENAPVATNANATTDQEGDIHLE) is disordered. The segment covering 249-268 (GDDDEDEDDSDNVMSSDDEN) has biased composition (acidic residues). A compositionally biased stretch (low complexity) spans 269 to 279 (APVATNANATT).

It belongs to the peptidase T1A family. The 26S proteasome consists of a 20S proteasome core and two 19S regulatory subunits. The 20S proteasome core is composed of 28 subunits that are arranged in four stacked rings, resulting in a barrel-shaped structure. The two end rings are each formed by seven alpha subunits, and the two central rings are each formed by seven beta subunits. The catalytic chamber with the active sites is on the inside of the barrel. The alpha and beta forms are probably products of the same gene with different post-translational modifications.

It is found in the cytoplasm. Its subcellular location is the nucleus. Its function is as follows. The proteasome degrades poly-ubiquitinated proteins in the cytoplasm and in the nucleus. It is essential for the regulated turnover of proteins and for the removal of misfolded proteins. The proteasome is a multicatalytic proteinase complex that is characterized by its ability to cleave peptides with Arg, Phe, Tyr, Leu, and Glu adjacent to the leaving group at neutral or slightly basic pH. It has an ATP-dependent proteolytic activity. This Saccharomyces cerevisiae (strain ATCC 204508 / S288c) (Baker's yeast) protein is Probable proteasome subunit alpha type-7 (PRE10).